Reading from the N-terminus, the 206-residue chain is Large ribosomal subunit protein uL4 (206 aa).

Belongs to the universal ribosomal protein uL4 family. Part of the 50S ribosomal subunit.

One of the primary rRNA binding proteins, this protein initially binds near the 5'-end of the 23S rRNA. It is important during the early stages of 50S assembly. It makes multiple contacts with different domains of the 23S rRNA in the assembled 50S subunit and ribosome. Functionally, forms part of the polypeptide exit tunnel. The protein is Large ribosomal subunit protein uL4 of Bradyrhizobium sp. (strain BTAi1 / ATCC BAA-1182).